A 185-amino-acid polypeptide reads, in one-letter code: Ribosome-recycling factor (185 aa).

Belongs to the RRF family.

It localises to the cytoplasm. Its function is as follows. Responsible for the release of ribosomes from messenger RNA at the termination of protein biosynthesis. May increase the efficiency of translation by recycling ribosomes from one round of translation to another. The sequence is that of Ribosome-recycling factor from Desulfosudis oleivorans (strain DSM 6200 / JCM 39069 / Hxd3) (Desulfococcus oleovorans).